Reading from the N-terminus, the 574-residue chain is Egalitarian protein homolog (574 aa).

A disordered region spans residues 259–278 (LNEDGSENGSDEGEETNNNG). The span at 262–273 (DGSENGSDEGEE) shows a compositional bias: acidic residues. Residues 312–414 (NMEKKVVGLD…SLLQHEKFNK (103 aa)) form the 3'-5' exonuclease domain.

As to quaternary structure, component of a dynein-regulating complex composed of at least bicd-1, dlc-1 and egal-1.

It localises to the nucleus envelope. Functionally, part of a complex with bicd-1 and dlc-1, which is recruited to the nuclear envelope by unc-83, where in turn, it recruits dynein to the nuclear surface and regulates nuclear migration in hypodermal precursor cells. The polypeptide is Egalitarian protein homolog (Caenorhabditis elegans).